The primary structure comprises 200 residues: NADH-quinone oxidoreductase subunit C (200 aa).

It belongs to the complex I 30 kDa subunit family. NDH-1 is composed of 14 different subunits. Subunits NuoB, C, D, E, F, and G constitute the peripheral sector of the complex.

It is found in the cell inner membrane. It carries out the reaction a quinone + NADH + 5 H(+)(in) = a quinol + NAD(+) + 4 H(+)(out). NDH-1 shuttles electrons from NADH, via FMN and iron-sulfur (Fe-S) centers, to quinones in the respiratory chain. The immediate electron acceptor for the enzyme in this species is believed to be ubiquinone. Couples the redox reaction to proton translocation (for every two electrons transferred, four hydrogen ions are translocated across the cytoplasmic membrane), and thus conserves the redox energy in a proton gradient. This chain is NADH-quinone oxidoreductase subunit C, found in Burkholderia multivorans (strain ATCC 17616 / 249).